We begin with the raw amino-acid sequence, 719 residues long: Pesticidal crystal protein Cry1Ic (719 aa).

It belongs to the delta endotoxin family.

Its function is as follows. Promotes colloidosmotic lysis by binding to the midgut epithelial cells of insects. In Bacillus thuringiensis, this protein is Pesticidal crystal protein Cry1Ic (cry1Ic).